A 187-amino-acid polypeptide reads, in one-letter code: Elongation factor P (187 aa).

It belongs to the elongation factor P family.

It is found in the cytoplasm. It functions in the pathway protein biosynthesis; polypeptide chain elongation. In terms of biological role, involved in peptide bond synthesis. Stimulates efficient translation and peptide-bond synthesis on native or reconstituted 70S ribosomes in vitro. Probably functions indirectly by altering the affinity of the ribosome for aminoacyl-tRNA, thus increasing their reactivity as acceptors for peptidyl transferase. This chain is Elongation factor P, found in Jannaschia sp. (strain CCS1).